The chain runs to 30 residues: Dermaseptin-J10 (30 aa).

In terms of tissue distribution, expressed by the skin glands.

It localises to the secreted. Functionally, has antimicrobial activity. This is Dermaseptin-J10 from Phasmahyla jandaia (Jandaia leaf frog).